A 292-amino-acid chain; its full sequence is Glutamate racemase (292 aa).

Substrate-binding positions include 10–11 (DS) and 42–43 (YG). Catalysis depends on C73, which acts as the Proton donor/acceptor. Residue 74 to 75 (NS) participates in substrate binding. C186 acts as the Proton donor/acceptor in catalysis. 187 to 188 (TH) serves as a coordination point for substrate.

The protein belongs to the aspartate/glutamate racemases family.

The catalysed reaction is L-glutamate = D-glutamate. The protein operates within cell wall biogenesis; peptidoglycan biosynthesis. Functionally, provides the (R)-glutamate required for cell wall biosynthesis. The chain is Glutamate racemase from Beutenbergia cavernae (strain ATCC BAA-8 / DSM 12333 / CCUG 43141 / JCM 11478 / NBRC 16432 / NCIMB 13614 / HKI 0122).